A 390-amino-acid polypeptide reads, in one-letter code: Sulfate adenylyltransferase (390 aa).

It belongs to the sulfate adenylyltransferase family.

The catalysed reaction is sulfate + ATP + H(+) = adenosine 5'-phosphosulfate + diphosphate. It functions in the pathway sulfur metabolism; hydrogen sulfide biosynthesis; sulfite from sulfate: step 1/3. The polypeptide is Sulfate adenylyltransferase (sat) (Synechocystis sp. (strain ATCC 27184 / PCC 6803 / Kazusa)).